The sequence spans 115 residues: Large ribosomal subunit protein uL22 (115 aa).

This sequence belongs to the universal ribosomal protein uL22 family. Part of the 50S ribosomal subunit.

Functionally, this protein binds specifically to 23S rRNA; its binding is stimulated by other ribosomal proteins, e.g. L4, L17, and L20. It is important during the early stages of 50S assembly. It makes multiple contacts with different domains of the 23S rRNA in the assembled 50S subunit and ribosome. In terms of biological role, the globular domain of the protein is located near the polypeptide exit tunnel on the outside of the subunit, while an extended beta-hairpin is found that lines the wall of the exit tunnel in the center of the 70S ribosome. The chain is Large ribosomal subunit protein uL22 from Coxiella burnetii (strain CbuG_Q212) (Coxiella burnetii (strain Q212)).